Consider the following 552-residue polypeptide: Serine protease 53 (552 aa).

A signal peptide spans 1–23 (MRQSWRPELLIVGAVVVIEGLQA). Peptidase S1 domains lie at 24 to 273 (AQRA…AHVH) and 294 to 525 (VACG…NLDW). The tract at residues 27 to 46 (ACGQRGPGPPEPQEGNTLPG) is disordered. Cys62 and Cys78 are joined by a disulfide. Residues His77 and Asp128 each act as charge relay system in the active site. 4 cysteine pairs are disulfide-bonded: Cys158–Cys230, Cys187–Cys209, Cys220–Cys249, and Cys326–Cys342. Residues Ser224, His341, and Asp382 each act as charge relay system in the active site. 2 disulfide bridges follow: Cys443-Cys463 and Cys473-Cys501. Ser477 (charge relay system) is an active-site residue.

This sequence belongs to the peptidase S1 family.

It localises to the secreted. Functionally, in vitro can degrade the fibrinogen alpha chain of as well as pro-urokinase-type plasminogen activator. The sequence is that of Serine protease 53 (Prss53) from Mus musculus (Mouse).